A 158-amino-acid polypeptide reads, in one-letter code: Pyruvoyl-dependent arginine decarboxylase (158 aa).

S44 is modified (pyruvic acid (Ser)).

The protein belongs to the PdaD family. Requires pyruvate as cofactor.

It carries out the reaction L-arginine + H(+) = agmatine + CO2. The polypeptide is Pyruvoyl-dependent arginine decarboxylase (Pyrococcus abyssi (strain GE5 / Orsay)).